Reading from the N-terminus, the 562-residue chain is Calcium-dependent protein kinase 5 (562 aa).

The region spanning 118-372 (ELDKYKLGKG…VHKIVNHKWF (255 aa)) is the Protein kinase domain. ATP is bound by residues 124–132 (LGKGSYGNV) and lysine 147. Catalysis depends on aspartate 238, which acts as the Proton acceptor. The short motif at 394 to 402 (KFKKFHKLC) is the J domain autoinhibitory motif element. Positions 394–429 (KFKKFHKLCKIKKLAITCIAYQLNKKKFGKMKKTFE) are j domain. Positions 403–412 (KIKKLAITCI) match the J domain EF-hand interaction motif motif. 4 EF-hand domains span residues 419-453 (KKFG…VGDN), 454-489 (EIDR…HSIL), 490-525 (EQDA…SNDQ), and 528-562 (FSKE…GRQS). The Ca(2+) site is built by aspartate 432, asparagine 434, aspartate 436, glutamate 443, aspartate 467, aspartate 469, asparagine 471, glutamate 478, aspartate 503, asparagine 505, aspartate 507, glutamate 514, aspartate 541, asparagine 543, aspartate 545, tyrosine 547, and glutamate 552.

The protein belongs to the protein kinase superfamily. Ser/Thr protein kinase family. CDPK subfamily. The cofactor is Mg(2+). Post-translationally, may be palmitoylated. Autophosphorylated in vitro.

The protein localises to the cytoplasm. It localises to the cytoplasmic vesicle. It is found in the secretory vesicle. The protein resides in the microneme membrane. Its subcellular location is the cell membrane. It catalyses the reaction L-seryl-[protein] + ATP = O-phospho-L-seryl-[protein] + ADP + H(+). The enzyme catalyses L-threonyl-[protein] + ATP = O-phospho-L-threonyl-[protein] + ADP + H(+). Activated by calcium. Upon calcium binding to the EF-hand domains, the C-terminus of the junction domain (J domain) undergoes a conformational change which results in the dissociation of the pseudo-substrate inhibitory motif from the catalytic domain. This, in turn, may facilitate the autophosphorylation of the activation loop at Thr-278, which leads to the kinase activation. Functionally, calcium-dependent protein kinase which acts as a sensor and effector of intracellular Ca(2+) levels probably in part downstream of cGMP-activated PKG kinase. Plays a central role in host erythrocytes and hepatocytes infection cycles. During the liver stage, involved in sporozoite motility and thus in sporozoite invasion of host hepatocytes, probably together with CDPK1 and CDPK4. Involved in merosome egress from host hepatocytes, probably together with CDPK4. Required for the release of hepatic merozoites from merosomes in the host blood stream. During the asexual blood stage, required for merozoite egress from host erythrocytes by triggering microneme secretion. Phosphorylates transporter NPT1 at late schizont stage. The polypeptide is Calcium-dependent protein kinase 5 (Plasmodium berghei (strain Anka)).